Reading from the N-terminus, the 110-residue chain is Putative membrane protein insertion efficiency factor (110 aa).

Belongs to the UPF0161 family.

The protein resides in the cell inner membrane. Functionally, could be involved in insertion of integral membrane proteins into the membrane. The sequence is that of Putative membrane protein insertion efficiency factor from Aliarcobacter butzleri (strain RM4018) (Arcobacter butzleri).